We begin with the raw amino-acid sequence, 391 residues long: UPF0229 protein BCB4264_A0587 (391 aa).

Residues 1 to 16 show a composition bias toward polar residues; sequence MGEENQPNYTISQENW. Disordered stretches follow at residues 1-31 and 80-117; these read MGEE…RHQE and HVGQ…GDAA. Positions 21 to 31 are enriched in basic and acidic residues; sequence KGYDDQQRHQE. The span at 98-115 shows a compositional bias: gly residues; it reads GSGGQKQKGPGKGQGAGD.

The protein belongs to the UPF0229 family.

This is UPF0229 protein BCB4264_A0587 from Bacillus cereus (strain B4264).